A 268-amino-acid chain; its full sequence is 4-hydroxy-tetrahydrodipicolinate reductase (268 aa).

Residues 10 to 15 (GAGGRM), Asp36, 99 to 101 (GTT), and 123 to 126 (APNM) each bind NAD(+). Catalysis depends on His156, which acts as the Proton donor/acceptor. His157 lines the (S)-2,3,4,5-tetrahydrodipicolinate pocket. The active-site Proton donor is Lys160. 166–167 (GT) lines the (S)-2,3,4,5-tetrahydrodipicolinate pocket.

It belongs to the DapB family.

It is found in the cytoplasm. The catalysed reaction is (S)-2,3,4,5-tetrahydrodipicolinate + NAD(+) + H2O = (2S,4S)-4-hydroxy-2,3,4,5-tetrahydrodipicolinate + NADH + H(+). It carries out the reaction (S)-2,3,4,5-tetrahydrodipicolinate + NADP(+) + H2O = (2S,4S)-4-hydroxy-2,3,4,5-tetrahydrodipicolinate + NADPH + H(+). Its pathway is amino-acid biosynthesis; L-lysine biosynthesis via DAP pathway; (S)-tetrahydrodipicolinate from L-aspartate: step 4/4. In terms of biological role, catalyzes the conversion of 4-hydroxy-tetrahydrodipicolinate (HTPA) to tetrahydrodipicolinate. This chain is 4-hydroxy-tetrahydrodipicolinate reductase, found in Dechloromonas aromatica (strain RCB).